Here is a 547-residue protein sequence, read N- to C-terminus: CTP synthase (547 aa).

An amidoligase domain region spans residues 1-265 (MTRYVFITGG…DEIVLRKLHI (265 aa)). S13 is a binding site for CTP. S13 provides a ligand contact to UTP. ATP-binding positions include 14–19 (SLGKGI) and D71. Mg(2+) contacts are provided by D71 and E139. CTP contacts are provided by residues 146-148 (DIE), 186-191 (KTKPTQ), and K222. Residues 186–191 (KTKPTQ) and K222 each bind UTP. The Glutamine amidotransferase type-1 domain maps to 290–541 (TVGMVGKYVD…IRAARAQHEK (252 aa)). An L-glutamine-binding site is contributed by G351. C378 (nucleophile; for glutamine hydrolysis) is an active-site residue. L-glutamine is bound by residues 379–382 (LGMQ), E402, and R469. Catalysis depends on residues H514 and E516.

It belongs to the CTP synthase family. Homotetramer.

The enzyme catalyses UTP + L-glutamine + ATP + H2O = CTP + L-glutamate + ADP + phosphate + 2 H(+). The catalysed reaction is L-glutamine + H2O = L-glutamate + NH4(+). It catalyses the reaction UTP + NH4(+) + ATP = CTP + ADP + phosphate + 2 H(+). It participates in pyrimidine metabolism; CTP biosynthesis via de novo pathway; CTP from UDP: step 2/2. Its activity is regulated as follows. Allosterically activated by GTP, when glutamine is the substrate; GTP has no effect on the reaction when ammonia is the substrate. The allosteric effector GTP functions by stabilizing the protein conformation that binds the tetrahedral intermediate(s) formed during glutamine hydrolysis. Inhibited by the product CTP, via allosteric rather than competitive inhibition. In terms of biological role, catalyzes the ATP-dependent amination of UTP to CTP with either L-glutamine or ammonia as the source of nitrogen. Regulates intracellular CTP levels through interactions with the four ribonucleotide triphosphates. In Thioalkalivibrio sulfidiphilus (strain HL-EbGR7), this protein is CTP synthase.